A 144-amino-acid chain; its full sequence is Cysteine-rich tail protein 1 (144 aa).

The tract at residues A51 to P105 is disordered. The span at I78–A98 shows a compositional bias: polar residues.

It belongs to the CYSRT1 family. Interacts with LCE1B; the interaction is direct. Interacts with LCE2C; the interaction is direct. Interacts with LCE3A; the interaction is direct. Interacts with LCE3C; the interaction is direct. Interacts with LCE4A; the interaction is direct. Interacts with LCE5A; the interaction is direct. Interacts with LCE1C. Interacts with LCE1D. Interacts with LCE1E. Interacts with LCE2A. Interacts with LCE3D. Interacts with LCE3E. Interacts with LCE1A. As to expression, expressed in the stratum granulosum, in skin and oral epithelia (at protein level).

The protein resides in the cornified envelope. In terms of biological role, component of the stratum corneum that may contribute to epidermal antimicrobial host defenses. This chain is Cysteine-rich tail protein 1 (CYSRT1), found in Homo sapiens (Human).